Here is a 459-residue protein sequence, read N- to C-terminus: Putrescine aminotransferase (459 aa).

Pyridoxal 5'-phosphate is bound by residues 150-151 and glutamine 274; that span reads GT. At lysine 300 the chain carries N6-(pyridoxal phosphate)lysine. Threonine 332 is a pyridoxal 5'-phosphate binding site.

It belongs to the class-III pyridoxal-phosphate-dependent aminotransferase family. Putrescine aminotransferase subfamily. It depends on pyridoxal 5'-phosphate as a cofactor.

The catalysed reaction is an alkane-alpha,omega-diamine + 2-oxoglutarate = an omega-aminoaldehyde + L-glutamate. The enzyme catalyses putrescine + 2-oxoglutarate = 1-pyrroline + L-glutamate + H2O. It carries out the reaction cadaverine + 2-oxoglutarate = 5-aminopentanal + L-glutamate. Its pathway is amine and polyamine degradation; putrescine degradation; 4-aminobutanal from putrescine (transaminase route): step 1/1. In terms of biological role, catalyzes the aminotransferase reaction from putrescine to 2-oxoglutarate, leading to glutamate and 4-aminobutanal, which spontaneously cyclizes to form 1-pyrroline. This is the first step in one of two pathways for putrescine degradation, where putrescine is converted into 4-aminobutanoate (gamma-aminobutyrate or GABA) via 4-aminobutanal. Also functions as a cadaverine transaminase in a a L-lysine degradation pathway to succinate that proceeds via cadaverine, glutarate and L-2-hydroxyglutarate. The protein is Putrescine aminotransferase of Escherichia coli O9:H4 (strain HS).